We begin with the raw amino-acid sequence, 191 residues long: Small ribosomal subunit protein uS10c (191 aa).

The transit peptide at Met-1–Phe-56 directs the protein to the chloroplast.

The protein belongs to the universal ribosomal protein uS10 family. As to quaternary structure, part of the 30S ribosomal subunit.

It is found in the plastid. It localises to the chloroplast. The protein is Small ribosomal subunit protein uS10c (RPS10) of Arabidopsis thaliana (Mouse-ear cress).